A 746-amino-acid chain; its full sequence is Probably inactive copalyl diphosphate synthase 3 (746 aa).

Positions Asp-331–Asp-334 match the DXDD motif; degenerated motif.

The protein belongs to the terpene synthase family. Tpsc subfamily. As to expression, mostly expressed in stems, and, at low levels, in roots and leaves, but barely in flowers.

The protein is Probably inactive copalyl diphosphate synthase 3 of Isodon rubescens (Rabdosia rubescens).